Reading from the N-terminus, the 156-residue chain is Cell division protein SepF (156 aa).

Residues 15–58 (SDVVPEDEDDEVIDEEPESSFDTDRSVTPIPAASTQPSTSQRKS) form a disordered region. The span at 18–35 (VPEDEDDEVIDEEPESSF) shows a compositional bias: acidic residues. Polar residues predominate over residues 47–57 (ASTQPSTSQRK).

It belongs to the SepF family. In terms of assembly, homodimer. Interacts with FtsZ.

It localises to the cytoplasm. Functionally, cell division protein that is part of the divisome complex and is recruited early to the Z-ring. Probably stimulates Z-ring formation, perhaps through the cross-linking of FtsZ protofilaments. Its function overlaps with FtsA. The sequence is that of Cell division protein SepF from Bifidobacterium animalis subsp. lactis (strain AD011).